Here is a 365-residue protein sequence, read N- to C-terminus: Peptide chain release factor 1 (365 aa).

Gln240 bears the N5-methylglutamine mark.

This sequence belongs to the prokaryotic/mitochondrial release factor family. Post-translationally, methylated by PrmC. Methylation increases the termination efficiency of RF1.

It localises to the cytoplasm. Functionally, peptide chain release factor 1 directs the termination of translation in response to the peptide chain termination codons UAG and UAA. This chain is Peptide chain release factor 1, found in Bifidobacterium animalis subsp. lactis (strain AD011).